The following is a 349-amino-acid chain: S-adenosylmethionine:tRNA ribosyltransferase-isomerase (349 aa).

This sequence belongs to the QueA family. In terms of assembly, monomer.

Its subcellular location is the cytoplasm. The enzyme catalyses 7-aminomethyl-7-carbaguanosine(34) in tRNA + S-adenosyl-L-methionine = epoxyqueuosine(34) in tRNA + adenine + L-methionine + 2 H(+). It functions in the pathway tRNA modification; tRNA-queuosine biosynthesis. Its function is as follows. Transfers and isomerizes the ribose moiety from AdoMet to the 7-aminomethyl group of 7-deazaguanine (preQ1-tRNA) to give epoxyqueuosine (oQ-tRNA). The protein is S-adenosylmethionine:tRNA ribosyltransferase-isomerase of Pseudomonas entomophila (strain L48).